The chain runs to 127 residues: Holo-[acyl-carrier-protein] synthase (127 aa).

Mg(2+) is bound by residues D9 and E58.

This sequence belongs to the P-Pant transferase superfamily. AcpS family. It depends on Mg(2+) as a cofactor.

It is found in the cytoplasm. It catalyses the reaction apo-[ACP] + CoA = holo-[ACP] + adenosine 3',5'-bisphosphate + H(+). In terms of biological role, transfers the 4'-phosphopantetheine moiety from coenzyme A to a Ser of acyl-carrier-protein. This Shewanella baltica (strain OS223) protein is Holo-[acyl-carrier-protein] synthase.